The sequence spans 60 residues: MDHRLLEIVACPVCNGKLYFNKENLELVCKVDNLAYPVRDGIPVLLENEARPLSIDEKHA.

Belongs to the UPF0434 family.

The protein is UPF0434 protein YPA_0693 of Yersinia pestis bv. Antiqua (strain Antiqua).